Reading from the N-terminus, the 853-residue chain is DNA mismatch repair protein MutS (853 aa).

An ATP-binding site is contributed by 614–621; the sequence is GPNMGGKS.

This sequence belongs to the DNA mismatch repair MutS family.

In terms of biological role, this protein is involved in the repair of mismatches in DNA. It is possible that it carries out the mismatch recognition step. This protein has a weak ATPase activity. This is DNA mismatch repair protein MutS from Enterobacter sp. (strain 638).